Consider the following 209-residue polypeptide: Uracil phosphoribosyltransferase (209 aa).

5-phospho-alpha-D-ribose 1-diphosphate contacts are provided by residues Arg-79, Arg-104, and 131 to 139; that span reads DPMLATGGS. Uracil-binding positions include Ile-194 and 199 to 201; that span reads GDA. Residue Asp-200 participates in 5-phospho-alpha-D-ribose 1-diphosphate binding.

This sequence belongs to the UPRTase family. It depends on Mg(2+) as a cofactor.

The catalysed reaction is UMP + diphosphate = 5-phospho-alpha-D-ribose 1-diphosphate + uracil. Its pathway is pyrimidine metabolism; UMP biosynthesis via salvage pathway; UMP from uracil: step 1/1. Allosterically activated by GTP. Its function is as follows. Catalyzes the conversion of uracil and 5-phospho-alpha-D-ribose 1-diphosphate (PRPP) to UMP and diphosphate. The chain is Uracil phosphoribosyltransferase from Lacticaseibacillus paracasei (strain ATCC 334 / BCRC 17002 / CCUG 31169 / CIP 107868 / KCTC 3260 / NRRL B-441) (Lactobacillus paracasei).